The chain runs to 407 residues: Chorismate synthase (407 aa).

NADP(+) is bound by residues arginine 40 and arginine 46. FMN-binding positions include 140–142 (RSS), 261–262 (QA), glycine 305, 320–324 (KPIST), and arginine 346.

It belongs to the chorismate synthase family. In terms of assembly, homotetramer. Requires FMNH2 as cofactor.

It carries out the reaction 5-O-(1-carboxyvinyl)-3-phosphoshikimate = chorismate + phosphate. It participates in metabolic intermediate biosynthesis; chorismate biosynthesis; chorismate from D-erythrose 4-phosphate and phosphoenolpyruvate: step 7/7. Functionally, catalyzes the anti-1,4-elimination of the C-3 phosphate and the C-6 proR hydrogen from 5-enolpyruvylshikimate-3-phosphate (EPSP) to yield chorismate, which is the branch point compound that serves as the starting substrate for the three terminal pathways of aromatic amino acid biosynthesis. This reaction introduces a second double bond into the aromatic ring system. The protein is Chorismate synthase of Corynebacterium glutamicum (strain R).